The chain runs to 65 residues: Large ribosomal subunit protein bL35 (65 aa).

The protein belongs to the bacterial ribosomal protein bL35 family.

This chain is Large ribosomal subunit protein bL35, found in Acetivibrio thermocellus (strain ATCC 27405 / DSM 1237 / JCM 9322 / NBRC 103400 / NCIMB 10682 / NRRL B-4536 / VPI 7372) (Clostridium thermocellum).